The sequence spans 181 residues: UPF0302 protein ABC1905 (181 aa).

This sequence belongs to the UPF0302 family.

In Shouchella clausii (strain KSM-K16) (Alkalihalobacillus clausii), this protein is UPF0302 protein ABC1905.